Here is a 214-residue protein sequence, read N- to C-terminus: Probable transaldolase (214 aa).

K83 functions as the Schiff-base intermediate with substrate in the catalytic mechanism.

This sequence belongs to the transaldolase family. Type 3B subfamily.

The protein resides in the cytoplasm. The enzyme catalyses D-sedoheptulose 7-phosphate + D-glyceraldehyde 3-phosphate = D-erythrose 4-phosphate + beta-D-fructose 6-phosphate. It participates in carbohydrate degradation; pentose phosphate pathway; D-glyceraldehyde 3-phosphate and beta-D-fructose 6-phosphate from D-ribose 5-phosphate and D-xylulose 5-phosphate (non-oxidative stage): step 2/3. Functionally, transaldolase is important for the balance of metabolites in the pentose-phosphate pathway. This Streptococcus equi subsp. zooepidemicus (strain MGCS10565) protein is Probable transaldolase.